We begin with the raw amino-acid sequence, 255 residues long: HLA class II histocompatibility antigen, DQ alpha 2 chain (255 aa).

A signal peptide spans 1 to 23; that stretch reads MILNKALLLGALALTAVMSPCGG. The segment at 24–110 is alpha-1; that stretch reads EDIVADHVAS…RQSNSTAATN (87 aa). Over 24-217 the chain is Extracellular; that stretch reads EDIVADHVAS…IPAPMSELTE (194 aa). Asparagine 104 and asparagine 144 each carry an N-linked (GlcNAc...) asparagine glycan. An alpha-2 region spans residues 111–204; it reads EVPEVTVFSK…GLDEPLLKHW (94 aa). The Ig-like C1-type domain maps to 113–205; it reads PEVTVFSKFP…LDEPLLKHWE (93 aa). The cysteines at positions 133 and 189 are disulfide-linked. The interval 205 to 217 is connecting peptide; sequence EPEIPAPMSELTE. Residues 218 to 240 form a helical membrane-spanning segment; that stretch reads TLVCALGLSVGLMGIVVGTVFII. Topologically, residues 241–255 are cytoplasmic; the sequence is QGLRSVGASRHQGLL.

Belongs to the MHC class II family. As to quaternary structure, heterodimer of an alpha and a beta subunit; also referred as MHC class II molecule. Dimer formation with HLA-DQB2, but not with HLA-DQB1, is required for efficient exit from the endoplasmic reticulum (ER). In the ER, forms a heterononamer; 3 MHC class II molecules bind to a CD74 homotrimer (also known as invariant chain or HLA class II histocompatibility antigen gamma chain). In the endosomal/lysosomal system; CD74 undergoes sequential degradation by various proteases; leaving a small fragment termed CLIP on each MHC class II molecule. MHC class II molecule interacts with HLA_DM, and HLA_DO in B-cells, in order to release CLIP and facilitate the binding of antigenic peptides. Association with HLA-DMA also occurs in skin Langerhans cells, in post-Golgi compartments. As to expression, restricted to skin Langerhans cells, although some expression at low levels may occur at the surface of B lymphoblastoid cells.

The protein resides in the cell membrane. The protein localises to the endoplasmic reticulum membrane. It is found in the golgi apparatus. Its subcellular location is the trans-Golgi network membrane. It localises to the endosome membrane. The protein resides in the lysosome membrane. Binds peptides derived from antigens that access the endocytic route of antigen presenting cells (APC) and presents them on the cell surface for recognition by the CD4 T-cells. The peptide binding cleft accommodates peptides of 10-30 residues. The peptides presented by MHC class II molecules are generated mostly by degradation of proteins that access the endocytic route, where they are processed by lysosomal proteases and other hydrolases. Exogenous antigens that have been endocytosed by the APC are thus readily available for presentation via MHC II molecules, and for this reason this antigen presentation pathway is usually referred to as exogenous. As membrane proteins on their way to degradation in lysosomes as part of their normal turn-over are also contained in the endosomal/lysosomal compartments, exogenous antigens must compete with those derived from endogenous components. Autophagy is also a source of endogenous peptides, autophagosomes constitutively fuse with MHC class II loading compartments. In addition to APCs, other cells of the gastrointestinal tract, such as epithelial cells, express MHC class II molecules and CD74 and act as APCs, which is an unusual trait of the GI tract. To produce a MHC class II molecule that presents an antigen, three MHC class II molecules (heterodimers of an alpha and a beta chain) associate with a CD74 trimer in the ER to form a heterononamer. Soon after the entry of this complex into the endosomal/lysosomal system where antigen processing occurs, CD74 undergoes a sequential degradation by various proteases, including CTSS and CTSL, leaving a small fragment termed CLIP (class-II-associated invariant chain peptide). The removal of CLIP is facilitated by HLA-DM via direct binding to the alpha-beta-CLIP complex so that CLIP is released. HLA-DM stabilizes MHC class II molecules until primary high affinity antigenic peptides are bound. The MHC II molecule bound to a peptide is then transported to the cell membrane surface. In B-cells, the interaction between HLA-DM and MHC class II molecules is regulated by HLA-DO. Primary dendritic cells (DCs) also to express HLA-DO. Lysosomal microenvironment has been implicated in the regulation of antigen loading into MHC II molecules, increased acidification produces increased proteolysis and efficient peptide loading. In Homo sapiens (Human), this protein is HLA class II histocompatibility antigen, DQ alpha 2 chain (HLA-DQA2).